We begin with the raw amino-acid sequence, 545 residues long: Eukaryotic translation initiation factor 3 subunit D-2 (545 aa).

The disordered stretch occupies residues 94–148 (FQRGRFRGNTRNNPRTRGRTGRGGAVTGTGGNQPGVGVNERTKYGKGRDNRRQMG). Positions 95–113 (QRGRFRGNTRNNPRTRGRT) are enriched in basic residues. Residues 114–127 (GRGGAVTGTGGNQP) are compositionally biased toward gly residues. Residues 133 to 145 (ERTKYGKGRDNRR) show a composition bias toward basic and acidic residues. The segment at 287 to 301 (QFDLLTVNETALEPP) is RNA gate.

Belongs to the eIF-3 subunit D family. Component of the eukaryotic translation initiation factor 3 (eIF-3) complex. The eIF-3 complex interacts with pix.

The protein localises to the cytoplasm. In terms of biological role, mRNA cap-binding component of the eukaryotic translation initiation factor 3 (eIF-3) complex, which is involved in protein synthesis of a specialized repertoire of mRNAs and, together with other initiation factors, stimulates binding of mRNA and methionyl-tRNAi to the 40S ribosome. The eIF-3 complex specifically targets and initiates translation of a subset of mRNAs involved in cell proliferation. In the eIF-3 complex, eif3d specifically recognizes and binds the 7-methylguanosine cap of a subset of mRNAs. This Drosophila pseudoobscura pseudoobscura (Fruit fly) protein is Eukaryotic translation initiation factor 3 subunit D-2.